Consider the following 219-residue polypeptide: Probable GTP-binding protein EngB (219 aa).

The EngB-type G domain occupies Val-24–Pro-207. GTP contacts are provided by residues Gly-32–Ser-39, Gly-59–His-63, Asp-81–Gly-84, Thr-148–Asp-151, and Phe-186–Ala-188. Positions 39 and 61 each coordinate Mg(2+).

The protein belongs to the TRAFAC class TrmE-Era-EngA-EngB-Septin-like GTPase superfamily. EngB GTPase family. It depends on Mg(2+) as a cofactor.

In terms of biological role, necessary for normal cell division and for the maintenance of normal septation. In Burkholderia cenocepacia (strain HI2424), this protein is Probable GTP-binding protein EngB.